We begin with the raw amino-acid sequence, 118 residues long: Large ribosomal subunit protein uL18 (118 aa).

It belongs to the universal ribosomal protein uL18 family. In terms of assembly, part of the 50S ribosomal subunit; part of the 5S rRNA/L5/L18/L25 subcomplex. Contacts the 5S and 23S rRNAs.

Functionally, this is one of the proteins that bind and probably mediate the attachment of the 5S RNA into the large ribosomal subunit, where it forms part of the central protuberance. This chain is Large ribosomal subunit protein uL18, found in Mycoplasmopsis pulmonis (strain UAB CTIP) (Mycoplasma pulmonis).